Consider the following 721-residue polypeptide: Quinolinate synthase, chloroplastic (721 aa).

The transit peptide at 1 to 67 directs the protein to the chloroplast; that stretch reads MDAANLVMKS…KIPSNNSTFT (67 aa). The active-site Cysteine persulfide intermediate is the C133. 2 residues coordinate iminosuccinate: H283 and S309. C363 is a [4Fe-4S] cluster binding site. Iminosuccinate contacts are provided by residues 392 to 394 and S414; that span reads YIN. C487 serves as a coordination point for [4Fe-4S] cluster. Residues 513 to 515 and T538 each bind iminosuccinate; that span reads HFE. C643 provides a ligand contact to [4Fe-4S] cluster.

It belongs to the quinolinate synthase family. Type 1 subfamily. Homodimer. Requires [4Fe-4S] cluster as cofactor.

It is found in the plastid. The protein localises to the chloroplast. The enzyme catalyses iminosuccinate + dihydroxyacetone phosphate = quinolinate + phosphate + 2 H2O + H(+). It participates in alkaloid biosynthesis; nicotine biosynthesis. It functions in the pathway cofactor biosynthesis; NAD(+) biosynthesis; quinolinate from iminoaspartate: step 1/1. Involved in the biosynthesis of pyridine alkaloid natural products, leading mainly to the production of anabasine, anatabine, nicotine and nornicotine, effective deterrents against herbivores with antiparasitic and pesticide properties (neurotoxins); nornicotine serves as the precursor in the synthesis of the carcinogen compound N'-nitrosonornicotine (NNN). Catalyzes the condensation of iminoaspartate with dihydroxyacetone phosphate to form quinolinate. The chain is Quinolinate synthase, chloroplastic from Nicotiana tabacum (Common tobacco).